Here is a 307-residue protein sequence, read N- to C-terminus: Fe-S cluster assembly protein dre2 (307 aa).

2 disordered regions span residues 1 to 26 (MTPVPVSVDTTADFAAPPTKTAPSTS) and 159 to 179 (KKKKAPAPTEQPPVATGVGFV). The span at 15–26 (AAPPTKTAPSTS) shows a compositional bias: low complexity. Residues 23–152 (PSTSTRTLLL…EKPAYQEAAV (130 aa)) form an N-terminal SAM-like domain region. The tract at residues 153 to 197 (PLRLGGKKKKAPAPTEQPPVATGVGFVDGNDELIDEDDLLSDDDL) is linker. [2Fe-2S] cluster-binding residues include C207, C219, C222, and C224. Residues 207-224 (CQPEKAKKRRRPCKDCTC) form a fe-S binding site A region. The [4Fe-4S] cluster site is built by C270, C273, C281, and C284. 2 short sequence motifs (cx2C motif) span residues 270 to 273 (CNSC) and 281 to 284 (CSSC). Residues 270–284 (CNSCSLGDAFRCSSC) form a fe-S binding site B region.

The protein belongs to the anamorsin family. In terms of assembly, monomer. Interacts with tah18. Interacts with mia40. It depends on [2Fe-2S] cluster as a cofactor. [4Fe-4S] cluster serves as cofactor.

The protein localises to the cytoplasm. It localises to the mitochondrion intermembrane space. Its function is as follows. Component of the cytosolic iron-sulfur (Fe-S) protein assembly (CIA) machinery required for the maturation of extramitochondrial Fe-S proteins. Part of an electron transfer chain functioning in an early step of cytosolic Fe-S biogenesis, facilitating the de novo assembly of a [4Fe-4S] cluster on the scaffold complex cfd1-nbp35. Electrons are transferred to dre2 from NADPH via the FAD- and FMN-containing protein tah18. Tah18-dre2 are also required for the assembly of the diferric tyrosyl radical cofactor of ribonucleotide reductase (RNR), probably by providing electrons for reduction during radical cofactor maturation in the catalytic small subunit rnr2. The sequence is that of Fe-S cluster assembly protein dre2 from Aspergillus terreus (strain NIH 2624 / FGSC A1156).